A 138-amino-acid chain; its full sequence is MRIMGLDVGSKTVGVAISDPLGWTAQGVETIQIDESRKQFGYDRVKELVLEYEVEKVVVGLPKNMNNTIGPRAESSKIYAEVLESRIGLPVVLWDERLTTSAAERTLIEADVSRKKRKEVIDKLAAVMILQSYLDTTN.

It belongs to the YqgF nuclease family.

It localises to the cytoplasm. Could be a nuclease involved in processing of the 5'-end of pre-16S rRNA. This Listeria innocua serovar 6a (strain ATCC BAA-680 / CLIP 11262) protein is Putative pre-16S rRNA nuclease.